The following is a 207-amino-acid chain: LexA repressor (207 aa).

Residues 33-52 constitute a DNA-binding region (H-T-H motif); the sequence is VKEMSETFGISHASVHDRIN. Residues Ser-129 and Lys-166 each act as for autocatalytic cleavage activity in the active site.

It belongs to the peptidase S24 family. In terms of assembly, homodimer.

It catalyses the reaction Hydrolysis of Ala-|-Gly bond in repressor LexA.. Functionally, represses a number of genes involved in the response to DNA damage (SOS response), including recA and lexA. In the presence of single-stranded DNA, RecA interacts with LexA causing an autocatalytic cleavage which disrupts the DNA-binding part of LexA, leading to derepression of the SOS regulon and eventually DNA repair. The chain is LexA repressor from Oleidesulfovibrio alaskensis (strain ATCC BAA-1058 / DSM 17464 / G20) (Desulfovibrio alaskensis).